A 383-amino-acid chain; its full sequence is tRNA(Met) cytidine acetate ligase (383 aa).

Residues 7 to 20, Gly-101, Asn-150, and Arg-175 each bind ATP; that span reads ITEYNPLHNGHRYH.

This sequence belongs to the TmcAL family.

It localises to the cytoplasm. The catalysed reaction is cytidine(34) in elongator tRNA(Met) + acetate + ATP = N(4)-acetylcytidine(34) in elongator tRNA(Met) + AMP + diphosphate. In terms of biological role, catalyzes the formation of N(4)-acetylcytidine (ac(4)C) at the wobble position of elongator tRNA(Met), using acetate and ATP as substrates. First activates an acetate ion to form acetyladenylate (Ac-AMP) and then transfers the acetyl group to tRNA to form ac(4)C34. In Lactiplantibacillus plantarum (strain ATCC BAA-793 / NCIMB 8826 / WCFS1) (Lactobacillus plantarum), this protein is tRNA(Met) cytidine acetate ligase.